The chain runs to 302 residues: Putative beta-glucosidase 17 (302 aa).

Positions 1–27 (MMAVAAATRIAVVVVAALAALAPGARG) are cleaved as a signal peptide. A beta-D-glucoside contacts are provided by residues Gln-47, His-149, and 194–195 (NE). Glu-195 (proton donor) is an active-site residue. An intrachain disulfide couples Cys-214 to Cys-221. Residue Asn-274 is glycosylated (N-linked (GlcNAc...) asparagine).

The protein belongs to the glycosyl hydrolase 1 family.

The enzyme catalyses Hydrolysis of terminal, non-reducing beta-D-glucosyl residues with release of beta-D-glucose.. The polypeptide is Putative beta-glucosidase 17 (BGLU17) (Oryza sativa subsp. japonica (Rice)).